The sequence spans 89 residues: Cell division topological specificity factor (89 aa).

Belongs to the MinE family.

Its function is as follows. Prevents the cell division inhibition by proteins MinC and MinD at internal division sites while permitting inhibition at polar sites. This ensures cell division at the proper site by restricting the formation of a division septum at the midpoint of the long axis of the cell. The sequence is that of Cell division topological specificity factor from Serratia proteamaculans (strain 568).